The primary structure comprises 575 residues: MISGILASPGIAFGKALLLKEDEIVIDRKKISADKVDQEVERFLSGRAKASAQLEAIKTKAGETFGEEKEAIFEGHIMLLEDEELEQEIIALIKDKHMTADAAAHEVIEGQATALEELDDEYLKERAADVRDIGKRLLRNILGLAIIDLSAIQEEVILVAADLTPSETAQLNLQKVLGFITDAGGRTSHTSIMARSLELPAIVGTGSVTAQVKNGDYLILDAVNNQVYVNPTNDVIEQLRAVQEQVATEKAELAKLKDLPAITLDGHQVEVCANIGTVRDVEGAERNGAEGVGLYRTEFLFMDRDALPTEEEQFAAYKAVAEACGSQAVIVRTMDIGGDKELPYMNFPKEENPFLGWRAVRIAMDRKEILRDQVRAILRASAFGKLRIMFPMIISVEEVRALRKEIEIYKQELRDEGKAFDESIEIGVMVETPAAATIARHLAKEVDFFSIGTNDLTQYTLAVDRGNDMISHLYQPMSPSVLNLIKQVIDASHAEGKWTGMCGELAGDERATLLLLGMGLDEFSMSAISIPRIKKIIRNTNFEDAKVLAEQALAQPTTDELMTLVNKFIEEKTIC.

His-189 acts as the Tele-phosphohistidine intermediate in catalysis. Residues Arg-296 and Arg-332 each coordinate phosphoenolpyruvate. Residues Glu-431 and Asp-455 each coordinate Mg(2+). Phosphoenolpyruvate contacts are provided by residues 454-455 (ND) and Arg-465. The Proton donor role is filled by Cys-502.

This sequence belongs to the PEP-utilizing enzyme family. Homodimer. Mg(2+) serves as cofactor.

Its subcellular location is the cytoplasm. The catalysed reaction is L-histidyl-[protein] + phosphoenolpyruvate = N(pros)-phospho-L-histidyl-[protein] + pyruvate. Functionally, general (non sugar-specific) component of the phosphoenolpyruvate-dependent sugar phosphotransferase system (sugar PTS). This major carbohydrate active-transport system catalyzes the phosphorylation of incoming sugar substrates concomitantly with their translocation across the cell membrane. Enzyme I transfers the phosphoryl group from phosphoenolpyruvate (PEP) to the phosphoryl carrier protein (HPr). This Salmonella typhimurium (strain LT2 / SGSC1412 / ATCC 700720) protein is Phosphoenolpyruvate-protein phosphotransferase (ptsI).